We begin with the raw amino-acid sequence, 191 residues long: ATP synthase subunit b (191 aa).

A helical transmembrane segment spans residues 10–30; that stretch reads FLVPGPTAIAELIVFLLILFI. The segment at 170 to 191 is disordered; that stretch reads RAQRQPAASDVVGGQQREEVHR.

Belongs to the ATPase B chain family. As to quaternary structure, F-type ATPases have 2 components, F(1) - the catalytic core - and F(0) - the membrane proton channel. F(1) has five subunits: alpha(3), beta(3), gamma(1), delta(1), epsilon(1). F(0) has three main subunits: a(1), b(2) and c(10-14). The alpha and beta chains form an alternating ring which encloses part of the gamma chain. F(1) is attached to F(0) by a central stalk formed by the gamma and epsilon chains, while a peripheral stalk is formed by the delta and b chains.

The protein localises to the cell membrane. Functionally, f(1)F(0) ATP synthase produces ATP from ADP in the presence of a proton or sodium gradient. F-type ATPases consist of two structural domains, F(1) containing the extramembraneous catalytic core and F(0) containing the membrane proton channel, linked together by a central stalk and a peripheral stalk. During catalysis, ATP synthesis in the catalytic domain of F(1) is coupled via a rotary mechanism of the central stalk subunits to proton translocation. Component of the F(0) channel, it forms part of the peripheral stalk, linking F(1) to F(0). The protein is ATP synthase subunit b of Acidothermus cellulolyticus (strain ATCC 43068 / DSM 8971 / 11B).